The sequence spans 491 residues: Glutamate--tRNA ligase (491 aa).

Residues Pro-9 to Met-19 carry the 'HIGH' region motif. The 'KMSKS' region signature appears at Lys-253–Arg-257. ATP is bound at residue Lys-256.

The protein belongs to the class-I aminoacyl-tRNA synthetase family. Glutamate--tRNA ligase type 1 subfamily. Monomer.

It is found in the cytoplasm. The enzyme catalyses tRNA(Glu) + L-glutamate + ATP = L-glutamyl-tRNA(Glu) + AMP + diphosphate. In terms of biological role, catalyzes the attachment of glutamate to tRNA(Glu) in a two-step reaction: glutamate is first activated by ATP to form Glu-AMP and then transferred to the acceptor end of tRNA(Glu). This Leifsonia xyli subsp. xyli (strain CTCB07) protein is Glutamate--tRNA ligase.